The sequence spans 203 residues: Small ribosomal subunit protein uS4 (203 aa).

Positions 93–156 (QRLDNVVYRL…MKVPAILEAV (64 aa)) constitute an S4 RNA-binding domain.

This sequence belongs to the universal ribosomal protein uS4 family. In terms of assembly, part of the 30S ribosomal subunit. Contacts protein S5. The interaction surface between S4 and S5 is involved in control of translational fidelity.

In terms of biological role, one of the primary rRNA binding proteins, it binds directly to 16S rRNA where it nucleates assembly of the body of the 30S subunit. Functionally, with S5 and S12 plays an important role in translational accuracy. The polypeptide is Small ribosomal subunit protein uS4 (Lactococcus lactis subsp. cremoris (strain MG1363)).